The primary structure comprises 358 residues: uncharacterized protein (358 aa).

29 to 36 (GPINSGKT) provides a ligand contact to ATP.

It belongs to the archaeal ATPase family.

This is an uncharacterized protein from Methanocaldococcus jannaschii (strain ATCC 43067 / DSM 2661 / JAL-1 / JCM 10045 / NBRC 100440) (Methanococcus jannaschii).